Here is a 190-residue protein sequence, read N- to C-terminus: Potassium-transporting ATPase KdpC subunit (190 aa).

The helical transmembrane segment at 10–30 threads the bilayer; it reads TFLFLLLITGGVYPLLTTALG.

It belongs to the KdpC family. As to quaternary structure, the system is composed of three essential subunits: KdpA, KdpB and KdpC.

Its subcellular location is the cell inner membrane. Functionally, part of the high-affinity ATP-driven potassium transport (or Kdp) system, which catalyzes the hydrolysis of ATP coupled with the electrogenic transport of potassium into the cytoplasm. This subunit acts as a catalytic chaperone that increases the ATP-binding affinity of the ATP-hydrolyzing subunit KdpB by the formation of a transient KdpB/KdpC/ATP ternary complex. This chain is Potassium-transporting ATPase KdpC subunit, found in Escherichia coli O7:K1 (strain IAI39 / ExPEC).